Reading from the N-terminus, the 896-residue chain is Lipoxygenase 2, chloroplastic (896 aa).

A chloroplast-targeting transit peptide spans 1-56; it reads MYCRESLSSLQTLNVAKSLSSLFPKQSALINPISAGRRNNLPRPNLRRRCKVTASR. The PLAT domain occupies 79–199; the sequence is ITAQEEFLEG…VDPTKRIFFS (121 aa). The segment at 175–232 is EIF4E2 binding; that stretch reads GSITFTCESWVAPKSVDPTKRIFFSDKSYLPSQTPEPLKKYRKEELETLQGKNREEVG. A Lipoxygenase domain is found at 202-896; it reads SYLPSQTPEP…GMGVPYSISI (695 aa). Fe cation is bound by residues H554, H559, H746, N750, and I896.

It belongs to the lipoxygenase family. In terms of assembly, interacts with EIF4E2. It depends on Fe cation as a cofactor. In terms of tissue distribution, in leaves and inflorescences but not abundant in seeds, roots and stems.

Its subcellular location is the plastid. The protein localises to the chloroplast. It is found in the cytoplasm. The catalysed reaction is (9Z,12Z)-octadecadienoate + O2 = (13S)-hydroperoxy-(9Z,11E)-octadecadienoate. It catalyses the reaction (9Z,12Z,15Z)-octadecatrienoate + O2 = (13S)-hydroperoxy-(9Z,11E,15Z)-octadecatrienoate. It participates in lipid metabolism; oxylipin biosynthesis. Functionally, 13S-lipoxygenase that can use linolenic acid as substrates. Plant lipoxygenases may be involved in a number of diverse aspects of plant physiology including growth and development, pest resistance, and senescence or responses to wounding. Catalyzes the hydroperoxidation of lipids containing a cis,cis-1,4-pentadiene structure. Required for the wound-induced synthesis of jasmonic acid (JA) in leaves. The sequence is that of Lipoxygenase 2, chloroplastic (LOX2) from Arabidopsis thaliana (Mouse-ear cress).